A 413-amino-acid polypeptide reads, in one-letter code: 2,3-diketo-5-methylthiopentyl-1-phosphate enolase (413 aa).

Lys-98 functions as the Proton acceptor in the catalytic mechanism. Substrate contacts are provided by residues Lys-147, Lys-173–Glu-176, His-264, Gly-337, and Gly-359–Gly-360. Positions 173, 175, and 176 each coordinate Mg(2+). The residue at position 173 (Lys-173) is an N6-carboxylysine.

The protein belongs to the RuBisCO large chain family. Type IV subfamily. As to quaternary structure, homodimer. The cofactor is Mg(2+).

The enzyme catalyses 5-methylsulfanyl-2,3-dioxopentyl phosphate = 2-hydroxy-5-methylsulfanyl-3-oxopent-1-enyl phosphate. Its pathway is amino-acid biosynthesis; L-methionine biosynthesis via salvage pathway; L-methionine from S-methyl-5-thio-alpha-D-ribose 1-phosphate: step 3/6. Its function is as follows. Catalyzes the enolization of 2,3-diketo-5-methylthiopentyl-1-phosphate (DK-MTP-1-P) into 2-hydroxy-3-keto-5-methylthiopentenyl-1-phosphate (HK-MTPenyl-1-P). The protein is 2,3-diketo-5-methylthiopentyl-1-phosphate enolase of Geobacillus thermodenitrificans (strain NG80-2).